The following is a 207-amino-acid chain: DNA-directed RNA polymerase subunit alpha (207 aa).

It belongs to the RNA polymerase alpha chain family. In plastids the minimal PEP RNA polymerase catalytic core is composed of four subunits: alpha, beta, beta', and beta''. When a (nuclear-encoded) sigma factor is associated with the core the holoenzyme is formed, which can initiate transcription.

It localises to the plastid. Its subcellular location is the chloroplast. The enzyme catalyses RNA(n) + a ribonucleoside 5'-triphosphate = RNA(n+1) + diphosphate. Its function is as follows. DNA-dependent RNA polymerase catalyzes the transcription of DNA into RNA using the four ribonucleoside triphosphates as substrates. This Euglena myxocylindracea protein is DNA-directed RNA polymerase subunit alpha (rpoA).